Here is a 1900-residue protein sequence, read N- to C-terminus: Phosphatidylinositol 4-kinase STT4 (1900 aa).

S459 is modified (phosphoserine). A PIK helical domain is found at 1345–1530; sequence KIEGADSNEL…KPTLDRIRER (186 aa). The interval 1531–1648 is pleckstrin homology (PH) domain conferring phosphoinositide binding specificity; the sequence is MVSSFSQSHR…EKWQAAIFKV (118 aa). A PI3K/PI4K catalytic domain is found at 1617–1884; that stretch reads FMATFKIKKD…LIRKSYESIF (268 aa). The tract at residues 1623 to 1629 is G-loop; that stretch reads IKKDVKD. Residues 1751–1759 form a catalytic loop region; sequence QFKDRHNGN. The activation loop stretch occupies residues 1770–1794; it reads HIDFGFIFDIVPGGIKFEAVPFKLT.

It belongs to the PI3/PI4-kinase family. Type III PI4K subfamily.

The enzyme catalyses a 1,2-diacyl-sn-glycero-3-phospho-(1D-myo-inositol) + ATP = a 1,2-diacyl-sn-glycero-3-phospho-(1D-myo-inositol 4-phosphate) + ADP + H(+). Acts on phosphatidylinositol (PI) in the first committed step in the production of the second messenger inositol 1,4,5,-trisphosphate. STT4 functions in PKC1 protein kinase pathway. This is Phosphatidylinositol 4-kinase STT4 (STT4) from Saccharomyces cerevisiae (strain ATCC 204508 / S288c) (Baker's yeast).